The primary structure comprises 92 residues: Large ribosomal subunit protein bL27 (92 aa).

A propeptide spanning residues 1-8 (MLMNLQFF) is cleaved from the precursor. Residues 11 to 30 (HKGGGSTANGRDSAGRRLGA) are disordered.

The protein belongs to the bacterial ribosomal protein bL27 family. The N-terminus is cleaved by ribosomal processing cysteine protease Prp.

This is Large ribosomal subunit protein bL27 from Lactiplantibacillus plantarum (strain ATCC BAA-793 / NCIMB 8826 / WCFS1) (Lactobacillus plantarum).